A 200-amino-acid chain; its full sequence is Probable GTP-binding protein EngB (200 aa).

Residues Glu-24 to Ile-198 enclose the EngB-type G domain. GTP-binding positions include Gly-32–Ser-39, Gly-59–Met-63, Asp-77–Gly-80, Thr-144–Asp-147, and Phe-177–Ala-179. The Mg(2+) site is built by Ser-39 and Thr-61.

The protein belongs to the TRAFAC class TrmE-Era-EngA-EngB-Septin-like GTPase superfamily. EngB GTPase family. Mg(2+) is required as a cofactor.

In terms of biological role, necessary for normal cell division and for the maintenance of normal septation. In Nitrosococcus oceani (strain ATCC 19707 / BCRC 17464 / JCM 30415 / NCIMB 11848 / C-107), this protein is Probable GTP-binding protein EngB.